Reading from the N-terminus, the 565-residue chain is Nephronectin (565 aa).

Residues 1 to 19 (MDFLLALVLVSSLYLQAAA) form the signal peptide. Residues 52 to 87 (SWGQCQPVCQPRCKHGECIGPNKCKCHPGYAGKTCN) enclose the EGF-like 1 domain. Intrachain disulfides connect cysteine 56–cysteine 69, cysteine 60–cysteine 75, cysteine 77–cysteine 86, cysteine 93–cysteine 104, cysteine 100–cysteine 113, and cysteine 115–cysteine 127. The 40-residue stretch at 89-128 (DLNECGLKPRPCKHRCMNTYGSYKCYCLNGYMLMPDGSCS) folds into the EGF-like 2; calcium-binding domain. The 37-residue stretch at 132–168 (TCSMANCQYGCDVVKGQIRCQCPSPGLQLAPDGRTCV) folds into the EGF-like 3 domain. In terms of domain architecture, EGF-like 4; calcium-binding spans 169–213 (DVDECATGRASCPRFRQCVNTFGSYICKCHKGFDLMYIGGKYQCH). Cystine bridges form between cysteine 173/cysteine 186, cysteine 180/cysteine 195, cysteine 197/cysteine 212, cysteine 218/cysteine 231, cysteine 225/cysteine 240, and cysteine 242/cysteine 253. The EGF-like 5; calcium-binding domain maps to 214-254 (DIDECSLGQYQCSSFARCYNIRGSYKCKCKEGYQGDGLTCV). A disordered region spans residues 301–389 (YIPPIITNRP…KPRGDVFIPR (89 aa)). Over residues 304 to 316 (PIITNRPTSKPTT) the composition is skewed to low complexity. The span at 317–347 (RPTPKPTPIPTPPPPPPLPTELRTPLPPTTP) shows a compositional bias: pro residues. The Integrin interaction signature appears at 382–384 (RGD). The MAM domain occupies 420–563 (HSCNFDHGLC…VSLKKGHCSE (144 aa)).

This sequence belongs to the nephronectin family. As to quaternary structure, homodimer and homotrimer. In terms of tissue distribution, expressed in kidney and lung and to a lower extent in brain, pregnant uterus, placenta, thyroid gland and blood vessels.

Its subcellular location is the secreted. The protein localises to the extracellular space. It localises to the extracellular matrix. Functional ligand of integrin alpha-8/beta-1 in kidney development. Regulates the expression of GDNF with integrin alpha-8/beta-1 which is essential for kidney development. May also play a role in the development and function of various tissues, regulating cell adhesion, spreading and survival through the binding of several integrins. In Homo sapiens (Human), this protein is Nephronectin (NPNT).